The sequence spans 323 residues: Aquaporin-4 (323 aa).

The Cytoplasmic portion of the chain corresponds to 1 to 36 (MSDGAAARRWGKCGPPCSRESIMVAFKGVWTQAFWK). Residues cysteine 13 and cysteine 17 are each lipidated (S-palmitoyl cysteine). Residues 37–57 (AVTAEFLAMLIFVLLSVGSTI) form a helical membrane-spanning segment. At 58–69 (NWGGSENPLPVD) the chain is on the extracellular side. Residues 70–89 (MVLISLCFGLSIATMVQCFG) traverse the membrane as a helical segment. Residues 90-93 (HISG) are Cytoplasmic-facing. Positions 94 to 101 (GHINPAVT) form an intramembrane region, discontinuously helical. Positions 97 to 99 (NPA) match the NPA 1 motif. The Cytoplasmic segment spans residues 102 to 115 (VAMVCTRKISIAKS). Serine 111 is modified (phosphoserine; by PKG). The helical transmembrane segment at 116–136 (VFYITAQCLGAIIGAGILYLV) threads the bilayer. At 137–155 (TPPSVVGGLGVTTVHGNLT) the chain is on the extracellular side. N-linked (GlcNAc...) asparagine glycosylation is present at asparagine 153. The helical transmembrane segment at 156–176 (AGHGLLVELIITFQLVFTIFA) threads the bilayer. At 177-184 (SCDSKRTD) the chain is on the cytoplasmic side. A Phosphoserine; by PKC modification is found at serine 180. The helical transmembrane segment at 185-205 (VTGSVALAIGFSVAIGHLFAI) threads the bilayer. Residues 206 to 208 (NYT) lie on the Extracellular side of the membrane. Residues 209-222 (GASMNPARSFGPAV) constitute an intramembrane region (discontinuously helical). Positions 213 to 215 (NPA) match the NPA 2 motif. Residues 223 to 231 (IMGNWENHW) lie on the Extracellular side of the membrane. Residues 232–252 (IYWVGPIIGAVLAGALYEYVF) form a helical membrane-spanning segment. The Cytoplasmic portion of the chain corresponds to 253–323 (CPDVELKRRL…DSSGEVLSSV (71 aa)). 2 positions are modified to phosphoserine: serine 276 and serine 285. Threonine 289 is modified (phosphothreonine). Position 321 is a phosphoserine (serine 321).

The protein belongs to the MIP/aquaporin (TC 1.A.8) family. As to quaternary structure, homotetramer. The tetramers can form oligomeric arrays in membranes. The size of the oligomers differs between tissues and is smaller in skeletal muscle than in brain. Interaction between AQP4 oligomeric arrays in close-by cells can contribute to cell-cell adhesion. Part of a complex containing MLC1, TRPV4, HEPACAM and ATP1B1. In terms of processing, phosphorylation by PKC at Ser-180 promotes internalization from the cell membrane, reducing the conductance by 50%. Phosphorylation by PKG at Ser-111 in response to glutamate increases conductance by 40%. Post-translationally, isoform Long: Palmitoylated on its N-terminal region. Isoform 3: Not palmitoylated. As to expression, detected in cerebellum. Detected on pericapillary astrocyte endfeet in cerebellum, and in skeletal muscle. Detected in glial lamellae in the hypothalamus (at protein level). Abundant in mature brain cortex, cerebellum and spinal cord. Highly expressed in the ependymal cell lining the aqueductal system and over the space of the brain in contact with the subarachnoid space. Detected in paraventricular and supraoptic nuclei, the granule cell layer of the dentate gyrus and the Purkinje cell layer in the cerebellum. Only weakly detectable in eye, kidney, intestine, and lung.

It localises to the cell membrane. The protein resides in the basolateral cell membrane. It is found in the endosome membrane. Its subcellular location is the sarcolemma. The protein localises to the cell projection. The enzyme catalyses H2O(in) = H2O(out). In terms of biological role, forms a water-specific channel. Plays an important role in brain water homeostasis and in glymphatic solute transport. Required for a normal rate of water exchange across the blood brain interface. Required for normal levels of cerebrospinal fluid influx into the brain cortex and parenchyma along paravascular spaces that surround penetrating arteries, and for normal drainage of interstitial fluid along paravenous drainage pathways. Thereby, it is required for normal clearance of solutes from the brain interstitial fluid, including soluble beta-amyloid peptides derived from APP. Plays a redundant role in urinary water homeostasis and urinary concentrating ability. The polypeptide is Aquaporin-4 (Aqp4) (Rattus norvegicus (Rat)).